The following is a 78-amino-acid chain: Defensin-like protein 90 (78 aa).

A signal peptide spans 1 to 25; that stretch reads MTTKMFSYVLLHSLMMFAIILSSMG. Intrachain disulfides connect C33–C70, C38–C59, C44–C68, and C48–C69.

This sequence belongs to the DEFL family.

It is found in the secreted. The chain is Defensin-like protein 90 from Arabidopsis thaliana (Mouse-ear cress).